Reading from the N-terminus, the 381-residue chain is Dual specificity protein phosphatase 6 (381 aa).

The Rhodanese domain occupies 30–148 (GNERLLLMDC…FQAEFSLHCE (119 aa)). The interval 176–203 (SSSDIESDLDRDPNSATDSDGSPLSNSQ) is disordered. Over residues 189–203 (NSATDSDGSPLSNSQ) the composition is skewed to polar residues. The 144-residue stretch at 206–349 (FPVEILPFLY…LLDFERTLGL (144 aa)) folds into the Tyrosine-protein phosphatase domain. Cys293 acts as the Phosphocysteine intermediate in catalysis.

It belongs to the protein-tyrosine phosphatase family. Non-receptor class dual specificity subfamily. As to quaternary structure, interacts with MAPK1/ERK2. In terms of processing, ubiquitinated by the SCF(FBXO31) complex, leading to its proteasomal degradation. In terms of tissue distribution, expressed in keratinocytes (at protein level).

Its subcellular location is the cytoplasm. The enzyme catalyses O-phospho-L-tyrosyl-[protein] + H2O = L-tyrosyl-[protein] + phosphate. The catalysed reaction is O-phospho-L-seryl-[protein] + H2O = L-seryl-[protein] + phosphate. It catalyses the reaction O-phospho-L-threonyl-[protein] + H2O = L-threonyl-[protein] + phosphate. Functionally, dual specificity protein phosphatase, which mediates dephosphorylation and inactivation of MAP kinases. Has a specificity for the ERK family. Plays an important role in alleviating chronic postoperative pain. Necessary for the normal dephosphorylation of the long-lasting phosphorylated forms of spinal MAPK1/3 and MAP kinase p38 induced by peripheral surgery, which drives the resolution of acute postoperative allodynia. Also important for dephosphorylation of MAPK1/3 in local wound tissue, which further contributes to resolution of acute pain. Promotes cell differentiation by regulating MAPK1/MAPK3 activity and regulating the expression of AP1 transcription factors. This chain is Dual specificity protein phosphatase 6 (DUSP6), found in Homo sapiens (Human).